A 533-amino-acid chain; its full sequence is Tyrosine ammonia-lyase (533 aa).

The active-site Proton donor/acceptor is Tyr-57. His-87 provides a ligand contact to substrate. The 5-imidazolinone (Ala-Gly) cross-link spans 146–148 (ASG). Ser-147 is subject to 2,3-didehydroalanine (Ser). Residues Asn-200 and Arg-305 each coordinate substrate.

The protein belongs to the TAL/TAM family. As to quaternary structure, homotetramer; dimer of dimers. In terms of processing, contains an active site 4-methylidene-imidazol-5-one (MIO), which is formed autocatalytically by cyclization and dehydration of residues Ala-Ser-Gly.

The catalysed reaction is L-tyrosine = (E)-4-coumarate + NH4(+). It catalyses the reaction L-tyrosine = 3-amino-3-(4-hydroxyphenyl)propanoate. Its function is as follows. Has ammonia-lyase and, to a lesser extent, aminomutase activity. Catalyzes the rearrangement of L-tyrosine to R-beta-tyrosine and S-beta-tyrosine. Does not accept L-histidine or L-phenylalanine as substrates. The chain is Tyrosine ammonia-lyase from Cupriavidus metallidurans (strain ATCC 43123 / DSM 2839 / NBRC 102507 / CH34) (Ralstonia metallidurans).